We begin with the raw amino-acid sequence, 288 residues long: Energy-coupling factor transporter ATP-binding protein EcfA2 (288 aa).

The 244-residue stretch at 3–246 folds into the ABC transporter domain; sequence ITFDHVSFTY…PAWLKANQLG (244 aa). 40–47 contacts ATP; it reads GHTGSGKS. The Proton acceptor role is filled by Glu171.

The protein belongs to the ABC transporter superfamily. Energy-coupling factor EcfA family. As to quaternary structure, forms a stable energy-coupling factor (ECF) transporter complex probably composed of 2 membrane-embedded substrate-binding proteins (S component), 2 ATP-binding proteins (A component) and 2 transmembrane proteins (T component). This complex interacts with a number of substrate-specific components, including FolT and ThiT for 5-formyltetrahydrofolate and thiamine respectively.

It localises to the cell membrane. In terms of biological role, ATP-binding (A) component of a common energy-coupling factor (ECF) ABC-transporter complex. Unlike classic ABC transporters this ECF transporter provides the energy necessary to transport a number of different substrates including 5-formyltetrahydrofolate and thiamine. Expression of the complex plus FolT or ThiT in Lactococcus lactis subsp. cremoris (strain NZ9000) allows 5-formyltetrahydrofolate or thiamine uptake respectively; 5-formyltetrahydrofolate or thiamine are not taken up in the absence of FolT/ThiT or the EcfA1A2T complex. Deenergized L.lactis subsp. cremoris (treated with 2-deoxyglucose) do not take up substrate. This Lacticaseibacillus paracasei (strain ATCC 334 / BCRC 17002 / CCUG 31169 / CIP 107868 / KCTC 3260 / NRRL B-441) (Lactobacillus paracasei) protein is Energy-coupling factor transporter ATP-binding protein EcfA2.